The primary structure comprises 72 residues: Hypertrehalosaemic prohormone (72 aa).

Residues 1-21 form the signal peptide; sequence MNHLVKVLIVVVAIALVLCEA. A Pyrrolidone carboxylic acid modification is found at Gln-22. Thr-31 carries the post-translational modification Threonine amide.

This sequence belongs to the AKH/HRTH/RPCH family. In terms of tissue distribution, expressed in corpora cardiaca.

The protein resides in the secreted. In terms of biological role, hypertrehalosaemic factors are neuropeptides that elevate the level of trehalose in the hemolymph (trehalose is the major carbohydrate in the hemolymph of insects). In Blaberus discoidalis (Tropical cockroach), this protein is Hypertrehalosaemic prohormone.